Consider the following 239-residue polypeptide: Phosphoadenosine 5'-phosphosulfate reductase (239 aa).

Cysteine 235 functions as the Nucleophile; cysteine thiosulfonate intermediate in the catalytic mechanism.

Belongs to the PAPS reductase family. CysH subfamily.

The protein localises to the cytoplasm. The enzyme catalyses [thioredoxin]-disulfide + sulfite + adenosine 3',5'-bisphosphate + 2 H(+) = [thioredoxin]-dithiol + 3'-phosphoadenylyl sulfate. It participates in sulfur metabolism; hydrogen sulfide biosynthesis; sulfite from sulfate: step 3/3. Its function is as follows. Catalyzes the formation of sulfite from phosphoadenosine 5'-phosphosulfate (PAPS) using thioredoxin as an electron donor. The chain is Phosphoadenosine 5'-phosphosulfate reductase from Thiocapsa roseopersicina.